A 198-amino-acid chain; its full sequence is tRNA(Phe) 7-((3-amino-3-carboxypropyl)-4-demethylwyosine(37)-N(4))-methyltransferase 1 (198 aa).

Belongs to the TYW3 family.

It catalyses the reaction 4-demethyl-7-[(3S)-3-amino-3-carboxypropyl]wyosine(37) in tRNA(Phe) + S-adenosyl-L-methionine = 7-[(3S)-3-amino-3-carboxypropyl]wyosine(37) in tRNA(Phe) + S-adenosyl-L-homocysteine + H(+). Its function is as follows. S-adenosyl-L-methionine-dependent methyltransferase that acts as a component of the wyosine derivatives biosynthesis pathway. Probably methylates N-4 position of wybutosine-86 to produce wybutosine-72. In Thermococcus kodakarensis (strain ATCC BAA-918 / JCM 12380 / KOD1) (Pyrococcus kodakaraensis (strain KOD1)), this protein is tRNA(Phe) 7-((3-amino-3-carboxypropyl)-4-demethylwyosine(37)-N(4))-methyltransferase 1.